We begin with the raw amino-acid sequence, 188 residues long: Pupal cuticle protein Edg-84A (188 aa).

An N-terminal signal peptide occupies residues 1-17 (MLVKTALFVTLIGLAQA). Positions 19 to 67 (PLPAKSSGSEDTYDSHPQYSFNYDVQDPETGDVKSQSESRDGDVVHGQY) are disordered. Over residues 24–41 (SSGSEDTYDSHPQYSFNY) the composition is skewed to polar residues. Residues 34–100 (HPQYSFNYDV…AVVRREPLSS (67 aa)) form the Chitin-binding type R&amp;R domain. Residues 49 to 62 (GDVKSQSESRDGDV) are compositionally biased toward basic and acidic residues.

In terms of tissue distribution, imaginal (anterior) epidermis.

In terms of biological role, component of the cuticle of the pupa of fruit fly. This chain is Pupal cuticle protein Edg-84A (Edg84A), found in Drosophila melanogaster (Fruit fly).